Reading from the N-terminus, the 301-residue chain is GTPase Era (301 aa).

Positions 7–175 (YCGFVAIVGR…AAIVRKHLPE (169 aa)) constitute an Era-type G domain. The segment at 15–22 (GRPNVGKS) is G1. 15 to 22 (GRPNVGKS) contacts GTP. The interval 41–45 (QTTRH) is G2. The segment at 62 to 65 (DTPG) is G3. GTP-binding positions include 62 to 66 (DTPGL) and 124 to 127 (NKVD). The G4 stretch occupies residues 124-127 (NKVD). The G5 stretch occupies residues 154 to 156 (ISA). Residues 206–283 (LGAELPYSVT…HLELWVKVKS (78 aa)) enclose the KH type-2 domain.

Belongs to the TRAFAC class TrmE-Era-EngA-EngB-Septin-like GTPase superfamily. Era GTPase family. In terms of assembly, monomer.

The protein localises to the cytoplasm. Its subcellular location is the cell inner membrane. In terms of biological role, an essential GTPase that binds both GDP and GTP, with rapid nucleotide exchange. Plays a role in 16S rRNA processing and 30S ribosomal subunit biogenesis and possibly also in cell cycle regulation and energy metabolism. The chain is GTPase Era from Klebsiella pneumoniae subsp. pneumoniae (strain ATCC 700721 / MGH 78578).